A 288-amino-acid polypeptide reads, in one-letter code: S-methyl-5'-thioadenosine phosphorylase (288 aa).

Residues Ser10, 52–53 (RH), and 85–86 (TA) contribute to the phosphate site. A substrate-binding site is contributed by Met188. Thr189 contributes to the phosphate binding site. 212-214 (DYD) lines the substrate pocket.

The protein belongs to the PNP/MTAP phosphorylase family. MTAP subfamily. As to quaternary structure, homotrimer.

It is found in the cytoplasm. The protein resides in the nucleus. It catalyses the reaction S-methyl-5'-thioadenosine + phosphate = 5-(methylsulfanyl)-alpha-D-ribose 1-phosphate + adenine. Its pathway is amino-acid biosynthesis; L-methionine biosynthesis via salvage pathway; S-methyl-5-thio-alpha-D-ribose 1-phosphate from S-methyl-5'-thioadenosine (phosphorylase route): step 1/1. Its function is as follows. Catalyzes the reversible phosphorylation of S-methyl-5'-thioadenosine (MTA) to adenine and 5-methylthioribose-1-phosphate. Involved in the breakdown of MTA, a major by-product of polyamine biosynthesis. Responsible for the first step in the methionine salvage pathway after MTA has been generated from S-adenosylmethionine. Has broad substrate specificity with 6-aminopurine nucleosides as preferred substrates. The sequence is that of S-methyl-5'-thioadenosine phosphorylase from Caenorhabditis elegans.